Here is a 662-residue protein sequence, read N- to C-terminus: Fructose-1,6-bisphosphatase class 3 (662 aa).

The protein belongs to the FBPase class 3 family. Mn(2+) serves as cofactor.

The catalysed reaction is beta-D-fructose 1,6-bisphosphate + H2O = beta-D-fructose 6-phosphate + phosphate. The protein operates within carbohydrate biosynthesis; gluconeogenesis. The polypeptide is Fructose-1,6-bisphosphatase class 3 (Clostridium tetani (strain Massachusetts / E88)).